We begin with the raw amino-acid sequence, 179 residues long: Ribosome maturation factor RimM (179 aa).

The PRC barrel domain occupies 100–176; that stretch reads HGEYHLTELI…FILLTPPSGL (77 aa).

This sequence belongs to the RimM family. In terms of assembly, binds ribosomal protein uS19.

Its subcellular location is the cytoplasm. In terms of biological role, an accessory protein needed during the final step in the assembly of 30S ribosomal subunit, possibly for assembly of the head region. Essential for efficient processing of 16S rRNA. May be needed both before and after RbfA during the maturation of 16S rRNA. It has affinity for free ribosomal 30S subunits but not for 70S ribosomes. The protein is Ribosome maturation factor RimM of Prochlorococcus marinus subsp. pastoris (strain CCMP1986 / NIES-2087 / MED4).